Reading from the N-terminus, the 274-residue chain is Large ribosomal subunit protein uL2cz/uL2cy (274 aa).

Disordered stretches follow at residues 1-22 and 224-274; these read MAINLYKTSTPSTRNGTVDSQV and NPVD…RRSK.

Belongs to the universal ribosomal protein uL2 family. Part of the 50S ribosomal subunit.

Its subcellular location is the plastid. The protein resides in the chloroplast. This is Large ribosomal subunit protein uL2cz/uL2cy (rpl2-A) from Helianthus annuus (Common sunflower).